Reading from the N-terminus, the 214-residue chain is Urease accessory protein UreF (214 aa).

This sequence belongs to the UreF family. As to quaternary structure, ureD, UreF and UreG form a complex that acts as a GTP-hydrolysis-dependent molecular chaperone, activating the urease apoprotein by helping to assemble the nickel containing metallocenter of UreC. The UreE protein probably delivers the nickel.

It is found in the cytoplasm. Its function is as follows. Required for maturation of urease via the functional incorporation of the urease nickel metallocenter. The chain is Urease accessory protein UreF from Ruegeria sp. (strain TM1040) (Silicibacter sp.).